Reading from the N-terminus, the 365-residue chain is Protein RecA (365 aa).

76–83 (GPESSGKT) provides a ligand contact to ATP. Residues 346–365 (DVPGSERDGDEDAGDMEASA) form a disordered region. A compositionally biased stretch (acidic residues) spans 353–365 (DGDEDAGDMEASA).

The protein belongs to the RecA family.

It localises to the cytoplasm. Its function is as follows. Can catalyze the hydrolysis of ATP in the presence of single-stranded DNA, the ATP-dependent uptake of single-stranded DNA by duplex DNA, and the ATP-dependent hybridization of homologous single-stranded DNAs. It interacts with LexA causing its activation and leading to its autocatalytic cleavage. In Parvibaculum lavamentivorans (strain DS-1 / DSM 13023 / NCIMB 13966), this protein is Protein RecA.